Reading from the N-terminus, the 2282-residue chain is Acetyl-CoA carboxylase (2282 aa).

Residues 16–515 (NIEKILIANN…HTGWLDQLIS (500 aa)) form the Biotin carboxylation domain. Residues 170–360 (YSECNGVPSE…LPATQLQIAM (191 aa)) enclose the ATP-grasp domain. ATP is bound at residue 196 to 253 (AQRVGFPAMIKASEGGGGKGIRKVTSMEDLESSFRQVQNEVPGSPIFFMKLVSNARHL). Positions 319, 331, and 333 each coordinate Mn(2+). Residue R335 is part of the active site. The Biotinyl-binding domain maps to 646-720 (FSQEYDPSIL…APGAIIANLE (75 aa)). K687 carries the post-translational modification N6-biotinyllysine. Over residues 1109-1129 (GSNSGSPTYGSPLIRSISSSG) the composition is skewed to low complexity. The tract at residues 1109–1141 (GSNSGSPTYGSPLIRSISSSGGSSGGSGFQISP) is disordered. In terms of domain architecture, CoA carboxyltransferase N-terminal spans 1495-1851 (PYPIMDAVQR…SGGEMVPIIS (357 aa)). The interval 1495-2178 (PYPIMDAVQR…EEDKLKLIDK (684 aa)) is carboxyltransferase. The CoA site is built by R1761, K2068, and R2070. Positions 1852–2178 (PIDSPHRDIE…EEDKLKLIDK (327 aa)) constitute a CoA carboxyltransferase C-terminal domain.

Requires biotin as cofactor. The cofactor is Mn(2+).

The protein resides in the cytoplasm. The enzyme catalyses hydrogencarbonate + acetyl-CoA + ATP = malonyl-CoA + ADP + phosphate + H(+). It carries out the reaction N(6)-biotinyl-L-lysyl-[protein] + hydrogencarbonate + ATP = N(6)-carboxybiotinyl-L-lysyl-[protein] + ADP + phosphate + H(+). It participates in lipid metabolism; malonyl-CoA biosynthesis; malonyl-CoA from acetyl-CoA: step 1/1. Functionally, catalyzes the rate-limiting reaction in the biogenesis of long-chain fatty acids. Carries out three functions: biotin carboxyl carrier protein, biotin carboxylase and carboxyltransferase. The polypeptide is Acetyl-CoA carboxylase (accA) (Dictyostelium discoideum (Social amoeba)).